We begin with the raw amino-acid sequence, 257 residues long: Tryptophan synthase alpha chain (257 aa).

Residues glutamate 44 and aspartate 55 each act as proton acceptor in the active site.

This sequence belongs to the TrpA family. In terms of assembly, tetramer of two alpha and two beta chains.

It catalyses the reaction (1S,2R)-1-C-(indol-3-yl)glycerol 3-phosphate + L-serine = D-glyceraldehyde 3-phosphate + L-tryptophan + H2O. It participates in amino-acid biosynthesis; L-tryptophan biosynthesis; L-tryptophan from chorismate: step 5/5. Functionally, the alpha subunit is responsible for the aldol cleavage of indoleglycerol phosphate to indole and glyceraldehyde 3-phosphate. The protein is Tryptophan synthase alpha chain of Chlamydia caviae (strain ATCC VR-813 / DSM 19441 / 03DC25 / GPIC) (Chlamydophila caviae).